Reading from the N-terminus, the 475-residue chain is ATP-dependent protease ATPase subunit HslU1 (475 aa).

Residues 1-27 (MMRRVTSSLPSALKLGRSLGPNVRFSG) constitute a mitochondrion transit peptide. Residues Ile66, 108–113 (GVGKTE), Asp286, Glu353, and Arg425 contribute to the ATP site.

It belongs to the ClpX chaperone family. HslU subfamily. A double ring-shaped homohexamer of HslV is capped on each side by a ring-shaped HslU homohexamer. The assembly of the HslU/HslV complex (HslVU) is dependent on binding of ATP.

Its subcellular location is the mitochondrion matrix. The protein localises to the kinetoplast. Functionally, ATPase subunit of a proteasome-like degradation complex; this subunit has chaperone activity. The binding of ATP and its subsequent hydrolysis by HslU are essential for unfolding of protein substrates subsequently hydrolyzed by HslV. HslU recognizes the N-terminal part of its protein substrates and unfolds these before they are guided to HslV for hydrolysis. The HslVU protease complex functions in mitochondrial DNA replication by regulating DNA helicase PIF2 protein levels. The sequence is that of ATP-dependent protease ATPase subunit HslU1 (HslU1) from Trypanosoma brucei brucei (strain 927/4 GUTat10.1).